Consider the following 258-residue polypeptide: Ubiquinone/menaquinone biosynthesis C-methyltransferase UbiE (258 aa).

S-adenosyl-L-methionine contacts are provided by residues T83, D104, and 130 to 131; that span reads DA.

It belongs to the class I-like SAM-binding methyltransferase superfamily. MenG/UbiE family.

It carries out the reaction a 2-demethylmenaquinol + S-adenosyl-L-methionine = a menaquinol + S-adenosyl-L-homocysteine + H(+). The catalysed reaction is a 2-methoxy-6-(all-trans-polyprenyl)benzene-1,4-diol + S-adenosyl-L-methionine = a 5-methoxy-2-methyl-3-(all-trans-polyprenyl)benzene-1,4-diol + S-adenosyl-L-homocysteine + H(+). Its pathway is quinol/quinone metabolism; menaquinone biosynthesis; menaquinol from 1,4-dihydroxy-2-naphthoate: step 2/2. It participates in cofactor biosynthesis; ubiquinone biosynthesis. Its function is as follows. Methyltransferase required for the conversion of demethylmenaquinol (DMKH2) to menaquinol (MKH2) and the conversion of 2-polyprenyl-6-methoxy-1,4-benzoquinol (DDMQH2) to 2-polyprenyl-3-methyl-6-methoxy-1,4-benzoquinol (DMQH2). In Bordetella bronchiseptica (strain ATCC BAA-588 / NCTC 13252 / RB50) (Alcaligenes bronchisepticus), this protein is Ubiquinone/menaquinone biosynthesis C-methyltransferase UbiE.